The sequence spans 507 residues: Glutamyl-tRNA(Gln) amidotransferase subunit A, mitochondrial (507 aa).

Catalysis depends on charge relay system residues Lys79 and Ser160. Ser184 acts as the Acyl-ester intermediate in catalysis.

It belongs to the amidase family. GatA subfamily. Subunit of the heterotrimeric GatCAB amidotransferase (AdT) complex, composed of A, B and C subunits.

It localises to the mitochondrion. It catalyses the reaction L-glutamyl-tRNA(Gln) + L-glutamine + ATP + H2O = L-glutaminyl-tRNA(Gln) + L-glutamate + ADP + phosphate + H(+). Functionally, allows the formation of correctly charged Gln-tRNA(Gln) through the transamidation of misacylated Glu-tRNA(Gln) in the mitochondria. The reaction takes place in the presence of glutamine and ATP through an activated gamma-phospho-Glu-tRNA(Gln). The protein is Glutamyl-tRNA(Gln) amidotransferase subunit A, mitochondrial of Drosophila pseudoobscura pseudoobscura (Fruit fly).